A 114-amino-acid polypeptide reads, in one-letter code: NADH-ubiquinone oxidoreductase chain 3 (114 aa).

3 helical membrane passes run 4 to 24 (LVYI…SYLL), 55 to 75 (FYLI…ILPF), and 82 to 102 (VSLL…IGFI).

It belongs to the complex I subunit 3 family.

The protein resides in the mitochondrion membrane. It carries out the reaction a ubiquinone + NADH + 5 H(+)(in) = a ubiquinol + NAD(+) + 4 H(+)(out). Core subunit of the mitochondrial membrane respiratory chain NADH dehydrogenase (Complex I) that is believed to belong to the minimal assembly required for catalysis. Complex I functions in the transfer of electrons from NADH to the respiratory chain. The immediate electron acceptor for the enzyme is believed to be ubiquinone. The chain is NADH-ubiquinone oxidoreductase chain 3 (ND3) from Allomyces macrogynus.